Here is a 63-residue protein sequence, read N- to C-terminus: U2-agatoxin-Ao1v (63 aa).

Positions 1–14 (LLLISAMVGSMIAA) are cleaved as a signal peptide. Positions 15–28 (VPEEESLQLSEDER) are excised as a propeptide. 3 cysteine pairs are disulfide-bonded: Cys-31-Cys-47, Cys-38-Cys-52, and Cys-46-Cys-62.

The protein belongs to the neurotoxin 01 (U2-agtx) family. Expressed by the venom gland.

It localises to the secreted. Its function is as follows. Insect active toxin causing rapid but reversible paralysis in crickets. No activity shown in mammals. Does not show effect on mammalian voltage-gated calcium channels. The protein is U2-agatoxin-Ao1v of Agelena orientalis (Funnel-web spider).